The sequence spans 328 residues: tRNA methyltransferase 10 homolog A (328 aa).

Disordered stretches follow at residues methionine 1–valine 91 and histidine 281–glutamine 328. Serine 22 is modified (phosphoserine). Residues arginine 43–serine 83 are a coiled coil. The segment covering lysine 52–lysine 62 has biased composition (basic and acidic residues). Residues glutamate 63–glutamate 75 are compositionally biased toward basic residues. The SAM-dependent MTase TRM10-type domain occupies arginine 88–valine 278. Over residues glutamate 305–glutamine 319 the composition is skewed to basic and acidic residues.

The protein belongs to the class IV-like SAM-binding methyltransferase superfamily. TRM10 family. Interacts with tRNA.

Its subcellular location is the nucleus. It localises to the nucleolus. It carries out the reaction guanosine(9) in tRNA + S-adenosyl-L-methionine = N(1)-methylguanosine(9) in tRNA + S-adenosyl-L-homocysteine + H(+). Its function is as follows. S-adenosyl-L-methionine-dependent guanine N(1)-methyltransferase that catalyzes the formation of N(1)-methylguanine at position 9 (m1G9) in tRNAs. Probably not able to catalyze formation of N(1)-methyladenine at position 9 (m1A9) in tRNAs. In Mus musculus (Mouse), this protein is tRNA methyltransferase 10 homolog A (Trmt10a).